We begin with the raw amino-acid sequence, 458 residues long: NADH-quinone oxidoreductase subunit N 1 (458 aa).

14 helical membrane-spanning segments follow: residues 12 to 32, 37 to 57, 70 to 90, 101 to 121, 124 to 144, 159 to 179, 199 to 219, 230 to 250, 266 to 286, 293 to 313, 321 to 341, 361 to 381, 393 to 413, and 438 to 458; these read ALIPEITLTGFASLILLAGLL, EVLVWSSVLFLVIFAFFIPSF, FLTIYLKLIIIIGTIISLLVL, FNESIAFILFSALGMMLLVSA, LISFFLSFELMSLSIYVLVGI, FMLGGFSSAIMLFGIAFIYGA, ILIGLGLFIVGLCFKIALVPF, APTPVTAFISTLPKVAILGAF, SNFLIVLSIATMATGNFFALI, MLAYSSIAHAGYIIIGVIVGT, VAYMFIYTLMNIGAFAMVIAF, IAMLIFMFSLTGVPPTAGFIV, GFTWLVVIAVIFTVISAYYYL, and VAILICTIGVTFLGILPLFLI.

The protein belongs to the complex I subunit 2 family. In terms of assembly, NDH-1 is composed of 14 different subunits. Subunits NuoA, H, J, K, L, M, N constitute the membrane sector of the complex.

Its subcellular location is the cell inner membrane. It carries out the reaction a quinone + NADH + 5 H(+)(in) = a quinol + NAD(+) + 4 H(+)(out). In terms of biological role, NDH-1 shuttles electrons from NADH, via FMN and iron-sulfur (Fe-S) centers, to quinones in the respiratory chain. The immediate electron acceptor for the enzyme in this species is believed to be ubiquinone. Couples the redox reaction to proton translocation (for every two electrons transferred, four hydrogen ions are translocated across the cytoplasmic membrane), and thus conserves the redox energy in a proton gradient. This Thermodesulfovibrio yellowstonii (strain ATCC 51303 / DSM 11347 / YP87) protein is NADH-quinone oxidoreductase subunit N 1.